We begin with the raw amino-acid sequence, 339 residues long: Transcription initiation factor IIB (339 aa).

Residues 39–70 form a TFIIB-type zinc finger; it reads EELICPVCGSKNIIKDYERAEIVCEMCGCVLQ. Residues cysteine 43, cysteine 46, cysteine 62, and cysteine 65 each contribute to the Zn(2+) site. Repeat copies occupy residues 156–239 and 250–331.

It belongs to the TFIIB family.

Functionally, stabilizes TBP binding to an archaeal box-A promoter. Also responsible for recruiting RNA polymerase II to the pre-initiation complex (DNA-TBP-TFIIB). In Methanococcus maripaludis (strain C6 / ATCC BAA-1332), this protein is Transcription initiation factor IIB.